The following is a 29-amino-acid chain: Cytochrome b6-f complex subunit 8 (29 aa).

The chain crosses the membrane as a helical span at residues 3–23; the sequence is ILALGWVSVLALFTWSIAMVV.

Belongs to the PetN family. As to quaternary structure, the 4 large subunits of the cytochrome b6-f complex are cytochrome b6, subunit IV (17 kDa polypeptide, PetD), cytochrome f and the Rieske protein, while the 4 small subunits are PetG, PetL, PetM and PetN. The complex functions as a dimer.

The protein localises to the cellular thylakoid membrane. Functionally, component of the cytochrome b6-f complex, which mediates electron transfer between photosystem II (PSII) and photosystem I (PSI), cyclic electron flow around PSI, and state transitions. The chain is Cytochrome b6-f complex subunit 8 from Gloeothece citriformis (strain PCC 7424) (Cyanothece sp. (strain PCC 7424)).